A 317-amino-acid polypeptide reads, in one-letter code: Putative ribose-phosphate pyrophosphokinase (317 aa).

A binding of phosphoribosylpyrophosphate region spans residues 211–224 (GRDVIVLDDEIAKG).

It belongs to the ribose-phosphate pyrophosphokinase family.

The catalysed reaction is D-ribose 5-phosphate + ATP = 5-phospho-alpha-D-ribose 1-diphosphate + AMP + H(+). The chain is Putative ribose-phosphate pyrophosphokinase from Streptomyces coelicolor (strain ATCC BAA-471 / A3(2) / M145).